A 90-amino-acid polypeptide reads, in one-letter code: Probable Fe(2+)-trafficking protein (90 aa).

The protein belongs to the Fe(2+)-trafficking protein family.

Could be a mediator in iron transactions between iron acquisition and iron-requiring processes, such as synthesis and/or repair of Fe-S clusters in biosynthetic enzymes. In Nitrosospira multiformis (strain ATCC 25196 / NCIMB 11849 / C 71), this protein is Probable Fe(2+)-trafficking protein.